The following is a 270-amino-acid chain: Orotidine 5'-phosphate decarboxylase (270 aa).

Substrate-binding positions include aspartate 41, 63-65, 95-104, tyrosine 221, and arginine 239; these read KTH and DRKFADIGNT. Lysine 97 serves as the catalytic Proton donor.

The protein belongs to the OMP decarboxylase family.

The enzyme catalyses orotidine 5'-phosphate + H(+) = UMP + CO2. The protein operates within pyrimidine metabolism; UMP biosynthesis via de novo pathway; UMP from orotate: step 2/2. The polypeptide is Orotidine 5'-phosphate decarboxylase (URA3) (Candida boidinii (Yeast)).